A 489-amino-acid polypeptide reads, in one-letter code: Nuclear distribution protein PAC1 (489 aa).

Residues 66–98 (STVLRLQKKIIDLENEISNLNNIINSSNSDNNG) adopt a coiled-coil conformation. WD repeat units lie at residues 119–158 (QCEN…NTIP), 164–205 (AHTR…RTLN), 206–246 (GHEH…SLKS), 249–291 (GHSE…GLAM), 328–368 (IPLE…IAPH), 389–428 (GHSS…ETGS), and 437–486 (GHDG…NSIK).

The protein belongs to the WD repeat LIS1/nudF family. As to quaternary structure, self-associates. Interacts with NDL1 and dynein.

It localises to the cytoplasm. It is found in the cytoskeleton. The protein localises to the spindle pole. Functionally, positively regulates the activity of the minus-end directed microtubule motor protein dynein. Plays a central role in positioning the mitotic spindle at the bud neck during cell division. Targets cytoplasmic dynein to microtubule plus ends, thereby promoting dynein-mediated microtubule sliding along the bud cortex and consequently the movement of the mitotic spindle to the bud neck. This Candida dubliniensis (strain CD36 / ATCC MYA-646 / CBS 7987 / NCPF 3949 / NRRL Y-17841) (Yeast) protein is Nuclear distribution protein PAC1.